Reading from the N-terminus, the 184-residue chain is Glutathione-regulated potassium-efflux system ancillary protein KefG (184 aa).

The protein belongs to the NAD(P)H dehydrogenase (quinone) family. KefG subfamily. In terms of assembly, interacts with KefB.

Its subcellular location is the cell inner membrane. It carries out the reaction a quinone + NADH + H(+) = a quinol + NAD(+). The catalysed reaction is a quinone + NADPH + H(+) = a quinol + NADP(+). Regulatory subunit of a potassium efflux system that confers protection against electrophiles. Required for full activity of KefB. The protein is Glutathione-regulated potassium-efflux system ancillary protein KefG of Erwinia tasmaniensis (strain DSM 17950 / CFBP 7177 / CIP 109463 / NCPPB 4357 / Et1/99).